Reading from the N-terminus, the 417-residue chain is RH-like protein (417 aa).

The next 11 helical transmembrane spans lie at 12-32, 44-64, 77-97, 125-145, 172-192, 203-223, 238-258, 265-285, 287-307, 331-351, and 358-378; these read CLPL…FFFT, LVAS…GLGF, VAFN…LDGF, ISMN…MELV, IHVF…KPLP, TSPS…WPTF, VFST…VSSL, INMT…GASC, VIHS…ISFG, TFGL…ALRV, and MIGF…AMSI.

It belongs to the ammonium transporter (TC 2.A.49) family. Rh subfamily.

It is found in the membrane. In terms of biological role, may be part of an oligomeric complex which is likely to have a transport or channel function in the erythrocyte membrane. The chain is RH-like protein from Macaca fascicularis (Crab-eating macaque).